The sequence spans 563 residues: GTPase Obg (563 aa).

Positions 2-168 (SDFVDRVTVH…RDVILELKSI (167 aa)) constitute an Obg domain. The OBG-type G domain maps to 169 to 349 (ADVALVGFPS…LNFALSALVH (181 aa)). GTP is bound by residues 175-182 (GFPSAGKS), 200-204 (FTTLV), 221-224 (DVPG), 301-304 (NKID), and 330-332 (STA). Residues Ser182 and Thr202 each contribute to the Mg(2+) site. In terms of domain architecture, OCT spans 383 to 469 (DEGGSALEFT…ARMVEFDWDP (87 aa)). The interval 529–563 (RKAGHWADPTVDDDRHDETSLFGHGESSEDGETEE) is disordered.

The protein belongs to the TRAFAC class OBG-HflX-like GTPase superfamily. OBG GTPase family. Monomer. Requires Mg(2+) as cofactor.

It is found in the cytoplasm. Its function is as follows. An essential GTPase which binds GTP, GDP and possibly (p)ppGpp with moderate affinity, with high nucleotide exchange rates and a fairly low GTP hydrolysis rate. Plays a role in control of the cell cycle, stress response, ribosome biogenesis and in those bacteria that undergo differentiation, in morphogenesis control. The chain is GTPase Obg from Bifidobacterium longum (strain DJO10A).